The sequence spans 425 residues: Serine hydroxymethyltransferase (425 aa).

Residues Leu120 and 124-126 contribute to the (6S)-5,6,7,8-tetrahydrofolate site; that span reads GHL. Residue Lys229 is modified to N6-(pyridoxal phosphate)lysine. Residue 353 to 355 participates in (6S)-5,6,7,8-tetrahydrofolate binding; sequence SPF.

This sequence belongs to the SHMT family. As to quaternary structure, homodimer. Pyridoxal 5'-phosphate is required as a cofactor.

Its subcellular location is the cytoplasm. The enzyme catalyses (6R)-5,10-methylene-5,6,7,8-tetrahydrofolate + glycine + H2O = (6S)-5,6,7,8-tetrahydrofolate + L-serine. It participates in one-carbon metabolism; tetrahydrofolate interconversion. Its pathway is amino-acid biosynthesis; glycine biosynthesis; glycine from L-serine: step 1/1. Catalyzes the reversible interconversion of serine and glycine with tetrahydrofolate (THF) serving as the one-carbon carrier. This reaction serves as the major source of one-carbon groups required for the biosynthesis of purines, thymidylate, methionine, and other important biomolecules. Also exhibits THF-independent aldolase activity toward beta-hydroxyamino acids, producing glycine and aldehydes, via a retro-aldol mechanism. In Thermosynechococcus vestitus (strain NIES-2133 / IAM M-273 / BP-1), this protein is Serine hydroxymethyltransferase.